A 74-amino-acid chain; its full sequence is Probable molt-inhibiting hormone (74 aa).

Disulfide bonds link Cys-6–Cys-43, Cys-23–Cys-39, and Cys-26–Cys-52. An Alanine amide modification is found at Ala-74.

Its subcellular location is the secreted. Inhibits Y-organs where molting hormone (ecdysteroid) is secreted. A molting cycle is initiated when MIH secretion diminishes or stops. Has little or no hyperglycemic activity. The protein is Probable molt-inhibiting hormone of Jasus lalandii (Cape rock lobster).